Here is a 244-residue protein sequence, read N- to C-terminus: NAD(P)H-quinone oxidoreductase subunit K (244 aa).

Residues Cys-60, Cys-61, Cys-125, and Cys-156 each contribute to the [4Fe-4S] cluster site. A disordered region spans residues 213–244 (KSEKSIESSKLNPVEESSENIYETNSIDEVIK). Positions 231–244 (ENIYETNSIDEVIK) are enriched in polar residues.

Belongs to the complex I 20 kDa subunit family. As to quaternary structure, NDH-1 can be composed of about 15 different subunits; different subcomplexes with different compositions have been identified which probably have different functions. It depends on [4Fe-4S] cluster as a cofactor.

Its subcellular location is the cellular thylakoid membrane. It carries out the reaction a plastoquinone + NADH + (n+1) H(+)(in) = a plastoquinol + NAD(+) + n H(+)(out). It catalyses the reaction a plastoquinone + NADPH + (n+1) H(+)(in) = a plastoquinol + NADP(+) + n H(+)(out). In terms of biological role, NDH-1 shuttles electrons from an unknown electron donor, via FMN and iron-sulfur (Fe-S) centers, to quinones in the respiratory and/or the photosynthetic chain. The immediate electron acceptor for the enzyme in this species is believed to be plastoquinone. Couples the redox reaction to proton translocation, and thus conserves the redox energy in a proton gradient. Cyanobacterial NDH-1 also plays a role in inorganic carbon-concentration. The protein is NAD(P)H-quinone oxidoreductase subunit K of Prochlorococcus marinus subsp. pastoris (strain CCMP1986 / NIES-2087 / MED4).